The chain runs to 275 residues: NH(3)-dependent NAD(+) synthetase (275 aa).

46 to 53 (GISGGQDS) is a binding site for ATP. Aspartate 52 lines the Mg(2+) pocket. Residue arginine 140 coordinates deamido-NAD(+). An ATP-binding site is contributed by threonine 160. Glutamate 165 provides a ligand contact to Mg(2+). 2 residues coordinate deamido-NAD(+): lysine 173 and aspartate 180. ATP-binding residues include lysine 189 and threonine 211. 260 to 261 (HK) is a binding site for deamido-NAD(+).

This sequence belongs to the NAD synthetase family. As to quaternary structure, homodimer.

The catalysed reaction is deamido-NAD(+) + NH4(+) + ATP = AMP + diphosphate + NAD(+) + H(+). Its pathway is cofactor biosynthesis; NAD(+) biosynthesis; NAD(+) from deamido-NAD(+) (ammonia route): step 1/1. Functionally, catalyzes the ATP-dependent amidation of deamido-NAD to form NAD. Uses ammonia as a nitrogen source. This is NH(3)-dependent NAD(+) synthetase from Shigella dysenteriae serotype 1 (strain Sd197).